Consider the following 340-residue polypeptide: ATP-dependent 6-phosphofructokinase (340 aa).

G11 serves as a coordination point for ATP. 21–25 (RAVVR) serves as a coordination point for ADP. Residues 72–73 (RY) and 102–105 (GDGS) each bind ATP. Mg(2+) is bound at residue D103. 125 to 127 (TID) lines the substrate pocket. D127 functions as the Proton acceptor in the catalytic mechanism. R154 provides a ligand contact to ADP. Residues R162 and 169–171 (MGR) each bind substrate. ADP is bound by residues 185-187 (GAD), K211, and 213-215 (KNH). Substrate-binding positions include E222, R244, and 250–253 (HIQR).

This sequence belongs to the phosphofructokinase type A (PFKA) family. ATP-dependent PFK group I subfamily. Prokaryotic clade 'B1' sub-subfamily. Homotetramer. Mg(2+) is required as a cofactor.

It is found in the cytoplasm. The enzyme catalyses beta-D-fructose 6-phosphate + ATP = beta-D-fructose 1,6-bisphosphate + ADP + H(+). It functions in the pathway carbohydrate degradation; glycolysis; D-glyceraldehyde 3-phosphate and glycerone phosphate from D-glucose: step 3/4. Its activity is regulated as follows. Allosterically activated by ADP and other diphosphonucleosides, and allosterically inhibited by phosphoenolpyruvate. Catalyzes the phosphorylation of D-fructose 6-phosphate to fructose 1,6-bisphosphate by ATP, the first committing step of glycolysis. The protein is ATP-dependent 6-phosphofructokinase of Lactococcus lactis subsp. lactis (Streptococcus lactis).